The chain runs to 397 residues: MSDTLLNPYFGEFGGMYVPEILVPVLKQLEQAFVEAQNDPTFQAEFADLLKNYAGRPTALTLCRNLTKGTKTKLYLKREDLLHGGAHKTNQVLGQILLAKRMGKTRIIAETGAGQHGVATALACAMLDMPCRVYMGAKDVERQSPNVFRMRLMGAEVIPVQKGSCSLKDACCEAMRDWSANYETTHYLLGTAAGPHPFPTIVREFQKMIGEETKRQILEREGRLPDTVIAAVGGGSNAIGMFADFIDESNVRLIGVEPAGKGIETGEHGAPLKHGTTGIYFGMKSPIMQDKDGQIEESYSISAGLDFPSVGPQHAYLNEIGRADYVSITDEEALNAFQELAKHEGIIPALESSHALAYALKLIKQNPEKEQLLVVNLSGRGDKDIFTVDKILNGGAN.

N6-(pyridoxal phosphate)lysine is present on K88.

The protein belongs to the TrpB family. As to quaternary structure, tetramer of two alpha and two beta chains. It depends on pyridoxal 5'-phosphate as a cofactor.

The enzyme catalyses (1S,2R)-1-C-(indol-3-yl)glycerol 3-phosphate + L-serine = D-glyceraldehyde 3-phosphate + L-tryptophan + H2O. The protein operates within amino-acid biosynthesis; L-tryptophan biosynthesis; L-tryptophan from chorismate: step 5/5. In terms of biological role, the beta subunit is responsible for the synthesis of L-tryptophan from indole and L-serine. The chain is Tryptophan synthase beta chain (trpB) from Haemophilus influenzae (strain ATCC 51907 / DSM 11121 / KW20 / Rd).